Consider the following 206-residue polypeptide: MTAFVVTGTDTGVGKTIFSAALTGALNAHYWKPVQAGLEDGADRDHVARLAGVPASHVLPESYRLNTPCSPHRAAELDGVVLDLARIALPDVRPLVVEGAGGALVPVTRNTTYADVFAWWNLPVVIVARTGLGTINHSLLTIEALRARGVPIHGVAFVGDAVEDSEATICAMGEVRRLGRLPMLGQLDRPALAQAFAEGFRVEDFA.

ATP is bound at residue 12–17 (GVGKTI). Threonine 16 is a binding site for Mg(2+). Residue lysine 32 is part of the active site. The Mg(2+) site is built by histidine 46 and glutamate 98. Residue 98–101 (EGAG) coordinates ATP.

The protein belongs to the dethiobiotin synthetase family. Homodimer. Mg(2+) serves as cofactor.

The protein resides in the cytoplasm. The enzyme catalyses (7R,8S)-7,8-diammoniononanoate + CO2 + ATP = (4R,5S)-dethiobiotin + ADP + phosphate + 3 H(+). The protein operates within cofactor biosynthesis; biotin biosynthesis; biotin from 7,8-diaminononanoate: step 1/2. In terms of biological role, catalyzes a mechanistically unusual reaction, the ATP-dependent insertion of CO2 between the N7 and N8 nitrogen atoms of 7,8-diaminopelargonic acid (DAPA, also called 7,8-diammoniononanoate) to form a ureido ring. The sequence is that of ATP-dependent dethiobiotin synthetase BioD from Novosphingobium aromaticivorans (strain ATCC 700278 / DSM 12444 / CCUG 56034 / CIP 105152 / NBRC 16084 / F199).